Consider the following 417-residue polypeptide: Tol-Pal system protein TolB (417 aa).

The first 16 residues, 1-16, serve as a signal peptide directing secretion; it reads MRYLWLFLIGTIGLFA.

The protein belongs to the TolB family. The Tol-Pal system is composed of five core proteins: the inner membrane proteins TolA, TolQ and TolR, the periplasmic protein TolB and the outer membrane protein Pal. They form a network linking the inner and outer membranes and the peptidoglycan layer.

Its subcellular location is the periplasm. In terms of biological role, part of the Tol-Pal system, which plays a role in outer membrane invagination during cell division and is important for maintaining outer membrane integrity. This Helicobacter pylori (strain HPAG1) protein is Tol-Pal system protein TolB.